Reading from the N-terminus, the 408-residue chain is Elongation factor Tu (408 aa).

In terms of domain architecture, tr-type G spans 10–219; that stretch reads KTHVNVGTIG…ALDTYIPDPV (210 aa). Residues 19 to 26, 88 to 92, and 143 to 146 contribute to the GTP site; these read GHVDHGKT, DCPGH, and NKCD. Threonine 26 lines the Mg(2+) pocket.

It belongs to the TRAFAC class translation factor GTPase superfamily. Classic translation factor GTPase family. EF-Tu/EF-1A subfamily. Monomer.

The protein resides in the cytoplasm. It carries out the reaction GTP + H2O = GDP + phosphate + H(+). Its function is as follows. GTP hydrolase that promotes the GTP-dependent binding of aminoacyl-tRNA to the A-site of ribosomes during protein biosynthesis. In Brachyspira hyodysenteriae (strain ATCC 49526 / WA1), this protein is Elongation factor Tu.